We begin with the raw amino-acid sequence, 23 residues long: Superoxide dismutase [Mn], mitochondrial (23 aa).

This sequence belongs to the iron/manganese superoxide dismutase family. In terms of assembly, homotetramer. Mn(2+) serves as cofactor.

Its subcellular location is the mitochondrion matrix. It carries out the reaction 2 superoxide + 2 H(+) = H2O2 + O2. In terms of biological role, destroys superoxide anion radicals which are normally produced within the cells and which are toxic to biological systems. The protein is Superoxide dismutase [Mn], mitochondrial of Aquarana catesbeiana (American bullfrog).